The primary structure comprises 763 residues: 5-methyltetrahydropteroyltriglutamate--homocysteine methyltransferase (763 aa).

5-methyltetrahydropteroyltri-L-glutamate is bound by residues 16 to 19 and Lys121; that span reads RELK. L-homocysteine contacts are provided by residues 440–442 and Glu493; that span reads IGS. L-methionine-binding positions include 440–442 and Glu493; that span reads IGS. Residues 524–525 and Trp570 contribute to the 5-methyltetrahydropteroyltri-L-glutamate site; that span reads RC. L-homocysteine is bound at residue Asp608. Asp608 provides a ligand contact to L-methionine. Position 614 (Glu614) interacts with 5-methyltetrahydropteroyltri-L-glutamate. Positions 650, 652, and 674 each coordinate Zn(2+). The active-site Proton donor is His703. Cys735 contacts Zn(2+).

This sequence belongs to the vitamin-B12 independent methionine synthase family. The cofactor is Zn(2+).

It catalyses the reaction 5-methyltetrahydropteroyltri-L-glutamate + L-homocysteine = tetrahydropteroyltri-L-glutamate + L-methionine. It participates in amino-acid biosynthesis; L-methionine biosynthesis via de novo pathway; L-methionine from L-homocysteine (MetE route): step 1/1. Its function is as follows. Catalyzes the transfer of a methyl group from 5-methyltetrahydrofolate to homocysteine resulting in methionine formation. In Paraburkholderia phymatum (strain DSM 17167 / CIP 108236 / LMG 21445 / STM815) (Burkholderia phymatum), this protein is 5-methyltetrahydropteroyltriglutamate--homocysteine methyltransferase.